A 555-amino-acid polypeptide reads, in one-letter code: Formate--tetrahydrofolate ligase (555 aa).

Threonine 65–serine 72 serves as a coordination point for ATP.

Belongs to the formate--tetrahydrofolate ligase family.

The enzyme catalyses (6S)-5,6,7,8-tetrahydrofolate + formate + ATP = (6R)-10-formyltetrahydrofolate + ADP + phosphate. It functions in the pathway one-carbon metabolism; tetrahydrofolate interconversion. The protein is Formate--tetrahydrofolate ligase of Staphylococcus haemolyticus (strain JCSC1435).